We begin with the raw amino-acid sequence, 499 residues long: L-arabinose isomerase (499 aa).

Residues E306, E333, H350, and H449 each coordinate Mn(2+).

This sequence belongs to the arabinose isomerase family. Requires Mn(2+) as cofactor.

The enzyme catalyses beta-L-arabinopyranose = L-ribulose. It participates in carbohydrate degradation; L-arabinose degradation via L-ribulose; D-xylulose 5-phosphate from L-arabinose (bacterial route): step 1/3. In terms of biological role, catalyzes the conversion of L-arabinose to L-ribulose. The chain is L-arabinose isomerase from Aeromonas hydrophila subsp. hydrophila (strain ATCC 7966 / DSM 30187 / BCRC 13018 / CCUG 14551 / JCM 1027 / KCTC 2358 / NCIMB 9240 / NCTC 8049).